Reading from the N-terminus, the 430-residue chain is MIFTTSKNSSFKAEFKELLERGKMDIAHVSATVGTIIDEIKSNKNQALKEHITKFDKWTPVSDEDLKISTESMSRAYENLDKALKAALHLSYDRIKAYHEKQKPRSWFDDEPNGTILGQRVTPVDSAGLYIPGGKAAYPSSLLMNVIPAQVAGVQNIVVCTPTPENEPNELLLAACHLCGVSEVYKVGGASAIAAMAYGTETIPKVDVITGPGNIFVATAKKMVFGDVNIDMIAGPSEIGILADDSANPSHMAVDMLSQAEHDEMASSILITPSQKLADAIKAEIENWLKILPRQKIARESIEKRGAIIVTSDMQEAIDLMNEIAPEHLEVATLSPFELLPLIKHAGAIFLGHNTPEAVGDYMAGPNHTLPTGGTAKFFSPLGVENFMKKTSIISFSAKAINEIGEECALIAKIEGLTAHEQSIRVRLVK.

Substrate contacts are provided by Ser-237, Gln-259, and His-262. Residues Gln-259 and His-262 each coordinate Zn(2+). Active-site proton acceptor residues include Glu-327 and His-328. Substrate contacts are provided by His-328, Asp-361, Glu-415, and His-420. Asp-361 serves as a coordination point for Zn(2+). His-420 serves as a coordination point for Zn(2+).

The protein belongs to the histidinol dehydrogenase family. It depends on Zn(2+) as a cofactor.

The catalysed reaction is L-histidinol + 2 NAD(+) + H2O = L-histidine + 2 NADH + 3 H(+). The protein operates within amino-acid biosynthesis; L-histidine biosynthesis; L-histidine from 5-phospho-alpha-D-ribose 1-diphosphate: step 9/9. In terms of biological role, catalyzes the sequential NAD-dependent oxidations of L-histidinol to L-histidinaldehyde and then to L-histidine. This chain is Histidinol dehydrogenase, found in Sulfurimonas denitrificans (strain ATCC 33889 / DSM 1251) (Thiomicrospira denitrificans (strain ATCC 33889 / DSM 1251)).